The following is a 420-amino-acid chain: L-rhamnose isomerase (420 aa).

Mn(2+)-binding residues include H264, D296, and D298.

The protein belongs to the rhamnose isomerase family. Mn(2+) is required as a cofactor.

The protein resides in the cytoplasm. It carries out the reaction L-rhamnopyranose = L-rhamnulose. Its pathway is carbohydrate degradation; L-rhamnose degradation; glycerone phosphate from L-rhamnose: step 1/3. Catalyzes the interconversion of L-rhamnose and L-rhamnulose. This chain is L-rhamnose isomerase, found in Listeria monocytogenes serotype 4b (strain CLIP80459).